The chain runs to 430 residues: Inactive metallocarboxypeptidase ECM14 (430 aa).

The signal sequence occupies residues 1 to 24 (MLHMNSLWGCFLFVLLAVTGAVQG). Positions 25 to 105 (LQEDYSEYAV…TLPTSQMMAR (81 aa)) are excised as a propeptide. N-linked (GlcNAc...) asparagine glycosylation is present at N41. The Peptidase M14 domain occupies 120-425 (EYRDLDTIYM…AALKYFCDFL (306 aa)). The Zn(2+) site is built by H182 and E185. Residues 182–185 (HARE), R240, and 257–258 (DH) each bind substrate. C251 and C272 form a disulfide bridge. N295 carries an N-linked (GlcNAc...) asparagine glycan. H310 is a Zn(2+) binding site. 311–312 (SY) serves as a coordination point for substrate.

Belongs to the peptidase M14 family. Zn(2+) is required as a cofactor. N-glycosylated.

The protein resides in the vacuole. It is found in the secreted. Its function is as follows. Inactive carboxypeptidase that may play a role in cell wall organization and biogenesis. This chain is Inactive metallocarboxypeptidase ECM14, found in Saccharomyces cerevisiae (strain ATCC 204508 / S288c) (Baker's yeast).